A 1023-amino-acid polypeptide reads, in one-letter code: MFRQSKTIITKLTNLSFQGSWRSRGSSAVEKALKYTVGQKIHNFTVKEVTAVPDLFLTAVKLSHDATGAQYLHAARDDSNNLFSVLFRTTPMDSTGVPHILEHTVLCGSQRFPCRDPFFKMLNRSLSTFMNAFTASDYTMYPFSTQNAKDFQNLLSVYLDAVFFPCLRELDFWQEGWRLEHENPTDPSSPLVFKGVVFNEMKGVFSDNERLYAQHLQNKLLPDHTYSVVSGGEPLAIPELTWEQLKHFHATHYHPSNARFFTYGDLPLEQHLQQIEEEAMSKFERTEPNTAVPPQTPWDKPRMDHVSCRPDALAPDPVKQNTLCMSFLLGDITDTFEMFTLSLLSSLMMSGPNSPFYKALIEPKIGSDFSSSAGFDGSTRQASFTIGLQGMAEDDTETVKHIIAQTIDDIIASGFEEEQIEALLHKIEIQMKHQSTSFGLALASYIASLWNHDGDPVQLLKISESVSRFRQCLKENPRYLQEKVQHYFKNNTHQLTLSMSPDERFLEKQAEAEEQKLQQKIQILSSEDRKDIYEKGLQLLAVQSTTQDASCLPALKVSDIEPIIPYTPVQPGAAGGVPVQYCEQPTNGMVYFRAMSNINSLPEDLKIYVPLFCSVITKMGSGMLDYRQQAQRIELKTGGLSVSPQIIPDTEDLDLYEQGIILSSSCLERNLPDMFQLWSDLFNSPRFDDEERLRVLVMMSAQELSNGISYSGHMYAMTRAARSLTPTADLQESFSGMDQVKFMKRIAEMTDLTSILRKLPRIKRHLFNPENMRCALNATPQKMPDVAAEVERFIGNIAGNRKERKPVRPSVVERALGPEAGAAATRKLISEAHFKPCQMKTYFQLPFNVNFVSECVRTVPFTHADYASLCILGRMMTAKFLHGEIREKGGAYGGGARMGGGGLFSFYSYRDPNSTQTLSAFRGGVEWARAGKFTQQDIDEAKLSVFSAVDAPVAPSDKGLGRFLNGITDEMKQAHRERLFAVTERNLIDVAGRYLGIGQQTCGVAILGPENESIRKDPSWVVK.

A mitochondrion-targeting transit peptide spans 1–62 (MFRQSKTIIT…PDLFLTAVKL (62 aa)). A Zn(2+)-binding site is contributed by His99. Glu102 functions as the Proton acceptor in the catalytic mechanism. Zn(2+) contacts are provided by His103 and Glu200. Residues Cys114 and Cys551 are joined by a disulfide bond.

Belongs to the peptidase M16 family. PreP subfamily. As to quaternary structure, monomer and homodimer; homodimerization is induced by binding of the substrate. The cofactor is Zn(2+). In terms of processing, a disulfide bond locks the enzyme in the closed conformation preventing substrate entry into the catalytic chamber.

It is found in the mitochondrion matrix. Its activity is regulated as follows. Mainly exists in a closed and catalytically competent conformation but a closed-to-open switch allows substrate entry into the catalytic chamber. Substrate binding induces closure and dimerization. A disulfide bond may lock the enzyme in a closed conformation preventing substrate entry into the catalytic chamber, participating in redox regulation of the enzyme. Inhibited by metal-chelating agents. Inhibited by nickel and zinc excess, and slightly activated by manganese. Functionally, metalloendopeptidase of the mitochondrial matrix that functions in peptide cleavage and degradation rather than in protein processing. Has an ATP-independent activity. Specifically cleaves peptides in the range of 5 to 65 residues. Shows a preference for cleavage after small polar residues and before basic residues, but without any positional preference. Degrades the transit peptides of mitochondrial proteins after their cleavage. Also degrades other unstructured peptides. In Danio rerio (Zebrafish), this protein is Presequence protease, mitochondrial (pitrm1).